The chain runs to 486 residues: ATP-dependent rRNA helicase RRP3 (486 aa).

Positions M1–H11 are enriched in basic residues. The disordered stretch occupies residues M1–A52. Positions V17 to E49 form a coiled coil. Basic and acidic residues predominate over residues E21–S38. Residues T41–A52 show a composition bias toward low complexity. The Q motif motif lies at S66 to S94. Positions I97–C269 constitute a Helicase ATP-binding domain. A110–T117 provides a ligand contact to ATP. The DEAD box motif lies at D216–D219. The Helicase C-terminal domain maps to L300–V446. Positions R459–E486 are disordered. Basic and acidic residues predominate over residues A476 to E486.

The protein belongs to the DEAD box helicase family. DDX47/RRP3 subfamily. Interacts with the SSU processome.

Its subcellular location is the nucleus. The catalysed reaction is ATP + H2O = ADP + phosphate + H(+). Functionally, ATP-dependent rRNA helicase required for pre-ribosomal RNA processing. Involved in the maturation of the 35S-pre-rRNA and to its cleavage to mature 18S rRNA. In Eremothecium gossypii (strain ATCC 10895 / CBS 109.51 / FGSC 9923 / NRRL Y-1056) (Yeast), this protein is ATP-dependent rRNA helicase RRP3.